The following is a 185-amino-acid chain: Gastrokine-1 (185 aa).

An N-terminal signal peptide occupies residues 1–20 (MKFTIVFAGLLGVFLAPALA). In terms of domain architecture, BRICHOS spans 54-150 (NNGWDSWNSI…MCRGIPTYMA (97 aa)). Cysteines 81 and 142 form a disulfide.

It belongs to the gastrokine family. As to expression, expressed in stomach (at protein level). No expression is detected in cancer tissue or gastric cancer cell lines.

The protein resides in the secreted. It localises to the cytoplasmic granule. It is found in the golgi apparatus. In terms of biological role, has mitogenic activity and may be involved in maintaining the integrity of the gastric mucosal epithelium. This chain is Gastrokine-1 (GKN1), found in Homo sapiens (Human).